A 428-amino-acid chain; its full sequence is Serine--tRNA ligase (428 aa).

Position 231 to 233 (231 to 233) interacts with L-serine; sequence TAE. 262–264 serves as a coordination point for ATP; the sequence is RSE. Residue Glu-285 participates in L-serine binding. Residue 349–352 coordinates ATP; the sequence is EISS. Ser-385 serves as a coordination point for L-serine.

Belongs to the class-II aminoacyl-tRNA synthetase family. Type-1 seryl-tRNA synthetase subfamily. As to quaternary structure, homodimer. The tRNA molecule binds across the dimer.

It is found in the cytoplasm. It carries out the reaction tRNA(Ser) + L-serine + ATP = L-seryl-tRNA(Ser) + AMP + diphosphate + H(+). It catalyses the reaction tRNA(Sec) + L-serine + ATP = L-seryl-tRNA(Sec) + AMP + diphosphate + H(+). The protein operates within aminoacyl-tRNA biosynthesis; selenocysteinyl-tRNA(Sec) biosynthesis; L-seryl-tRNA(Sec) from L-serine and tRNA(Sec): step 1/1. In terms of biological role, catalyzes the attachment of serine to tRNA(Ser). Is also able to aminoacylate tRNA(Sec) with serine, to form the misacylated tRNA L-seryl-tRNA(Sec), which will be further converted into selenocysteinyl-tRNA(Sec). This chain is Serine--tRNA ligase, found in Cellvibrio japonicus (strain Ueda107) (Pseudomonas fluorescens subsp. cellulosa).